A 217-amino-acid polypeptide reads, in one-letter code: N-(5'-phosphoribosyl)anthranilate isomerase (217 aa).

The protein belongs to the TrpF family.

It carries out the reaction N-(5-phospho-beta-D-ribosyl)anthranilate = 1-(2-carboxyphenylamino)-1-deoxy-D-ribulose 5-phosphate. It functions in the pathway amino-acid biosynthesis; L-tryptophan biosynthesis; L-tryptophan from chorismate: step 3/5. In Chlorobium luteolum (strain DSM 273 / BCRC 81028 / 2530) (Pelodictyon luteolum), this protein is N-(5'-phosphoribosyl)anthranilate isomerase.